The primary structure comprises 220 residues: Putative threonylcarbamoyl-AMP synthase (220 aa).

The YrdC-like domain maps to 17 to 202 (ARGIASAVAA…TPRILRAGPV (186 aa)).

It belongs to the SUA5 family.

The protein resides in the cytoplasm. It carries out the reaction L-threonine + hydrogencarbonate + ATP = L-threonylcarbamoyladenylate + diphosphate + H2O. Its function is as follows. Required for the formation of a threonylcarbamoyl group on adenosine at position 37 (t(6)A37) in tRNAs that read codons beginning with adenine. Catalyzes the conversion of L-threonine, HCO(3)(-)/CO(2) and ATP to give threonylcarbamoyl-AMP (TC-AMP) as the acyladenylate intermediate, with the release of diphosphate. This chain is Putative threonylcarbamoyl-AMP synthase, found in Mycobacterium leprae (strain TN).